Here is a 453-residue protein sequence, read N- to C-terminus: Magnesium transporter MgtE (453 aa).

Residues 1–286 (MNEGQEMEEQ…ENPLKAASKR (286 aa)) are Cytoplasmic-facing. Mg(2+)-binding residues include glutamate 71, aspartate 98, aspartate 102, glutamate 136, alanine 140, tyrosine 176, arginine 227, aspartate 230, alanine 233, aspartate 251, and glutamate 259. 2 consecutive CBS domains span residues 142-205 (MTTE…IADI) and 206-262 (LNER…EAAS). A helical membrane pass occupies residues 287–307 (LPWLITLLFLGMSTASLISNY). Position 308 (glutamate 308) is a topological domain, extracellular. A helical transmembrane segment spans residues 309-329 (SLVSEASILAVFISLITGTAG). Residues 330–360 (NAGTQSLAVAVRRLAMKDEKDSNFGRLILSE) are Cytoplasmic-facing. A helical membrane pass occupies residues 361-381 (VLTGLVTGAVTGLTIMIVVGV). The Extracellular portion of the chain corresponds to 382-389 (WQHNLPLG). A helical membrane pass occupies residues 390–410 (FVIGMAMLCAITVANLAGSLI). Residues 411–427 (PMLMDKLGFDPAVASGP) are Cytoplasmic-facing. A helical transmembrane segment spans residues 428–448 (FITTLSDLTSVLIYFNIASMF). Aspartate 434 contributes to the Mg(2+) binding site. The Extracellular segment spans residues 449–453 (MRYFV).

The protein belongs to the SLC41A transporter family. In terms of assembly, homodimer.

It is found in the cell membrane. It carries out the reaction Mg(2+)(in) = Mg(2+)(out). In terms of biological role, acts as a magnesium transporter. In Enterococcus faecalis (strain ATCC 700802 / V583), this protein is Magnesium transporter MgtE.